The chain runs to 336 residues: N-acetyl-gamma-glutamyl-phosphate reductase (336 aa).

Cys143 is a catalytic residue.

The protein belongs to the NAGSA dehydrogenase family. Type 1 subfamily.

It localises to the cytoplasm. The enzyme catalyses N-acetyl-L-glutamate 5-semialdehyde + phosphate + NADP(+) = N-acetyl-L-glutamyl 5-phosphate + NADPH + H(+). Its pathway is amino-acid biosynthesis; L-arginine biosynthesis; N(2)-acetyl-L-ornithine from L-glutamate: step 3/4. Catalyzes the NADPH-dependent reduction of N-acetyl-5-glutamyl phosphate to yield N-acetyl-L-glutamate 5-semialdehyde. This Dictyoglomus thermophilum (strain ATCC 35947 / DSM 3960 / H-6-12) protein is N-acetyl-gamma-glutamyl-phosphate reductase.